A 98-amino-acid polypeptide reads, in one-letter code: uncharacterized protein (98 aa).

A helical membrane pass occupies residues 10 to 30 (LYGFFAVTGVLIASFIIGEIV).

It is found in the host membrane. This is an uncharacterized protein from Saccharolobus islandicus (Sulfolobus islandicus).